The chain runs to 400 residues: ATP phosphoribosyltransferase regulatory subunit (400 aa).

It belongs to the class-II aminoacyl-tRNA synthetase family. HisZ subfamily. In terms of assembly, heteromultimer composed of HisG and HisZ subunits.

The protein resides in the cytoplasm. It participates in amino-acid biosynthesis; L-histidine biosynthesis; L-histidine from 5-phospho-alpha-D-ribose 1-diphosphate: step 1/9. Functionally, required for the first step of histidine biosynthesis. May allow the feedback regulation of ATP phosphoribosyltransferase activity by histidine. The sequence is that of ATP phosphoribosyltransferase regulatory subunit from Hahella chejuensis (strain KCTC 2396).